The sequence spans 431 residues: Glutamate-1-semialdehyde 2,1-aminomutase (431 aa).

The residue at position 269 (lysine 269) is an N6-(pyridoxal phosphate)lysine.

It belongs to the class-III pyridoxal-phosphate-dependent aminotransferase family. HemL subfamily. As to quaternary structure, homodimer. Pyridoxal 5'-phosphate serves as cofactor.

It is found in the cytoplasm. It catalyses the reaction (S)-4-amino-5-oxopentanoate = 5-aminolevulinate. It functions in the pathway porphyrin-containing compound metabolism; protoporphyrin-IX biosynthesis; 5-aminolevulinate from L-glutamyl-tRNA(Glu): step 2/2. The chain is Glutamate-1-semialdehyde 2,1-aminomutase from Francisella tularensis subsp. tularensis (strain WY96-3418).